Consider the following 273-residue polypeptide: Dermonecrotic toxin LafSicTox-betaIE1 (273 aa).

Histidine 5 is a catalytic residue. 2 residues coordinate Mg(2+): glutamate 25 and aspartate 27. Histidine 41 serves as the catalytic Nucleophile. Disulfide bonds link cysteine 45–cysteine 51 and cysteine 47–cysteine 189. Residue aspartate 85 participates in Mg(2+) binding. N-linked (GlcNAc...) asparagine glycosylation is present at asparagine 250.

This sequence belongs to the arthropod phospholipase D family. Class II subfamily. Requires Mg(2+) as cofactor. Expressed by the venom gland.

It is found in the secreted. The enzyme catalyses an N-(acyl)-sphingosylphosphocholine = an N-(acyl)-sphingosyl-1,3-cyclic phosphate + choline. The catalysed reaction is an N-(acyl)-sphingosylphosphoethanolamine = an N-(acyl)-sphingosyl-1,3-cyclic phosphate + ethanolamine. It carries out the reaction a 1-acyl-sn-glycero-3-phosphocholine = a 1-acyl-sn-glycero-2,3-cyclic phosphate + choline. It catalyses the reaction a 1-acyl-sn-glycero-3-phosphoethanolamine = a 1-acyl-sn-glycero-2,3-cyclic phosphate + ethanolamine. Its function is as follows. Dermonecrotic toxins cleave the phosphodiester linkage between the phosphate and headgroup of certain phospholipids (sphingolipid and lysolipid substrates), forming an alcohol (often choline) and a cyclic phosphate. This toxin acts on sphingomyelin (SM). It may also act on ceramide phosphoethanolamine (CPE), lysophosphatidylcholine (LPC) and lysophosphatidylethanolamine (LPE), but not on lysophosphatidylserine (LPS), and lysophosphatidylglycerol (LPG). It acts by transphosphatidylation, releasing exclusively cyclic phosphate products as second products. Induces dermonecrosis, hemolysis, increased vascular permeability, edema, inflammatory response, and platelet aggregation. The protein is Dermonecrotic toxin LafSicTox-betaIE1 of Loxosceles aff. spinulosa (strain GJB-2008) (Recluse spider).